The sequence spans 1237 residues: uncharacterized protein (1237 aa).

The MHD1 domain maps to 591 to 712; it reads KDMLEIYSDL…IVLSKYTQWT (122 aa). Residues 786–906 enclose the C2 domain; it reads LIEALDVAES…GDYLPREEWF (121 aa). The region spanning 1014–1130 is the MHD2 domain; sequence EAAIYELLDY…KPTDFLLQEC (117 aa).

This is an uncharacterized protein from Schizosaccharomyces pombe (strain 972 / ATCC 24843) (Fission yeast).